The primary structure comprises 282 residues: Large ribosomal subunit protein uL2 (282 aa).

Disordered regions lie at residues 26–55 (KKSP…RHRG) and 218–266 (PHVR…HNKS). Residues 34–43 (LESQSHTAGR) are compositionally biased toward polar residues. The segment covering 254–266 (TIGKKTRNKHNKS) has biased composition (basic residues).

The protein belongs to the universal ribosomal protein uL2 family. Part of the 50S ribosomal subunit. Forms a bridge to the 30S subunit in the 70S ribosome.

Its function is as follows. One of the primary rRNA binding proteins. Required for association of the 30S and 50S subunits to form the 70S ribosome, for tRNA binding and peptide bond formation. It has been suggested to have peptidyltransferase activity; this is somewhat controversial. Makes several contacts with the 16S rRNA in the 70S ribosome. The sequence is that of Large ribosomal subunit protein uL2 from Pediococcus pentosaceus (strain ATCC 25745 / CCUG 21536 / LMG 10740 / 183-1w).